Here is a 324-residue protein sequence, read N- to C-terminus: Porphobilinogen deaminase 1 (324 aa).

Residue cysteine 249 is modified to S-(dipyrrolylmethanemethyl)cysteine.

Belongs to the HMBS family. In terms of assembly, monomer. Dipyrromethane is required as a cofactor.

It catalyses the reaction 4 porphobilinogen + H2O = hydroxymethylbilane + 4 NH4(+). It functions in the pathway porphyrin-containing compound metabolism; protoporphyrin-IX biosynthesis; coproporphyrinogen-III from 5-aminolevulinate: step 2/4. Tetrapolymerization of the monopyrrole PBG into the hydroxymethylbilane pre-uroporphyrinogen in several discrete steps. This Streptomyces avermitilis (strain ATCC 31267 / DSM 46492 / JCM 5070 / NBRC 14893 / NCIMB 12804 / NRRL 8165 / MA-4680) protein is Porphobilinogen deaminase 1 (hemC1).